Consider the following 1146-residue polypeptide: MTTVIDATMAYRFLEEATDSSSSSSSSKLESSPVDAVLFVGMSLVLGIASRHLLRGTRVPYTVALLVIGIALGSLEYGAKHNLGKIGHGIRIWNEIDPELLLAVFLPALLFESSFSMEVHQIKRCLGQMVLLAVPGVLISTACLGSLVKVTFPYEWDWKTSLLLGGLLSATDPVAVVALLKELGASKKLSTIIEGESLMNDGTAIVVFQLFLKMAMGQNSDWSSIIKFLLKVALGAVGIGLAFGIASVIWLKFIFNDTVIEITLTIAVSYFAYYTAQEWAGASGVLTVMTLGMFYAAFARTAFKGDSQKSLHHFWEMVAYIANTLIFILSGVVIAEGILDSDKIAYQGNSWRFLFLLYVYIQLSRVVVVGVLYPLLCRFGYGLDWKESIILVWSGLRGAVALALSLSVKQSSGNSHISKETGTLFLFFTGGIVFLTLIVNGSTTQFVLRLLRMDILPAPKKRILEYTKYEMLNKALRAFQDLGDDEELGPADWPTVESYISSLKGSEGELVHHPHNGSKIGSLDPKSLKDIRMRFLNGVQATYWEMLDEGRISEVTANILMQSVDEALDQVSTTLCDWRGLKPHVNFPNYYNFLHSKVVPRKLVTYFAVERLESACYISAAFLRAHTIARQQLYDFLGESNIGSIVINESEKEGEEAKKFLEKVRSSFPQVLRVVKTKQVTYSVLNHLLGYIENLEKVGLLEEKEIAHLHDAVQTGLKKLLRNPPIVKLPKLSDMITSHPLSVALPPAFCEPLKHSKKEPMKLRGVTLYKEGSKPTGVWLIFDGIVKWKSKILSNNHSLHPTFSHGSTLGLYEVLTGKPYLCDLITDSMVLCFFIDSEKILSLQSDSTIDDFLWQESALVLLKLLRPQIFESVAMQELRALVSTESSKLTTYVTGESIEIDCNSIGLLLEGFVKPVGIKEELISSPAALSPSNGNQSFHNSSEASGIMRVSFSQQATQYIVETRARAIIFNIGAFGADRTLHRRPSSLTPPRSSSSDQLQRSFRKEHRGLMSWPENIYAKQQQEINKTTLSLSERAMQLSIFGSMVNVYRRSVSFGGIYNNKLQDNLLYKKLPLNPAQGLVSAKSESSIVTKKQLETRKHACQLPLKGESSTRQNTMVESSDEEDEDEGIVVRIDSPSKIVFRNDL.

The Extracellular segment spans residues 1–28; that stretch reads MTTVIDATMAYRFLEEATDSSSSSSSSK. The chain crosses the membrane as a helical span at residues 29–49; sequence LESSPVDAVLFVGMSLVLGIA. At 50–58 the chain is on the cytoplasmic side; sequence SRHLLRGTR. Residues 59-79 traverse the membrane as a helical segment; that stretch reads VPYTVALLVIGIALGSLEYGA. The Extracellular segment spans residues 80–99; it reads KHNLGKIGHGIRIWNEIDPE. A helical transmembrane segment spans residues 100–120; sequence LLLAVFLPALLFESSFSMEVH. At 121-127 the chain is on the cytoplasmic side; it reads QIKRCLG. Residues 128–148 form a helical membrane-spanning segment; that stretch reads QMVLLAVPGVLISTACLGSLV. The Extracellular segment spans residues 149–159; that stretch reads KVTFPYEWDWK. A helical membrane pass occupies residues 160–180; it reads TSLLLGGLLSATDPVAVVALL. Over 181–191 the chain is Cytoplasmic; sequence KELGASKKLST. A helical membrane pass occupies residues 192–212; it reads IIEGESLMNDGTAIVVFQLFL. At 213–227 the chain is on the extracellular side; the sequence is KMAMGQNSDWSSIIK. The chain crosses the membrane as a helical span at residues 228-250; that stretch reads FLLKVALGAVGIGLAFGIASVIW. Residues 251 to 253 are Cytoplasmic-facing; the sequence is LKF. A helical membrane pass occupies residues 254-273; sequence IFNDTVIEITLTIAVSYFAY. The Extracellular segment spans residues 274 to 278; that stretch reads YTAQE. A helical membrane pass occupies residues 279-299; it reads WAGASGVLTVMTLGMFYAAFA. Residues 300–313 lie on the Cytoplasmic side of the membrane; that stretch reads RTAFKGDSQKSLHH. The chain crosses the membrane as a helical span at residues 314–334; that stretch reads FWEMVAYIANTLIFILSGVVI. Residues 335 to 352 are Extracellular-facing; sequence AEGILDSDKIAYQGNSWR. A helical transmembrane segment spans residues 353 to 373; the sequence is FLFLLYVYIQLSRVVVVGVLY. Residues 374-387 lie on the Cytoplasmic side of the membrane; it reads PLLCRFGYGLDWKE. Residues 388 to 408 form a helical membrane-spanning segment; it reads SIILVWSGLRGAVALALSLSV. At 409–420 the chain is on the extracellular side; sequence KQSSGNSHISKE. The helical transmembrane segment at 421–441 threads the bilayer; sequence TGTLFLFFTGGIVFLTLIVNG. The Cytoplasmic segment spans residues 442–1146; the sequence is STTQFVLRLL…PSKIVFRNDL (705 aa). Disordered regions lie at residues 981-1001 and 1102-1128; these read LHRRPSSLTPPRSSSSDQLQR and CQLPLKGESSTRQNTMVESSDEEDEDE. A compositionally biased stretch (low complexity) spans 986–996; the sequence is SSLTPPRSSSS. Positions 1109–1118 are enriched in polar residues; that stretch reads ESSTRQNTMV.

This sequence belongs to the monovalent cation:proton antiporter 1 (CPA1) transporter (TC 2.A.36) family. In terms of assembly, interacts with CIPK24/SOS2 and CBL4/SOS3. In terms of processing, phosphorylated by CIPK24/SOS2 in complex with CBL4/SOS3. As to expression, more expressed in roots than in shoots. Mostly localized in parenchyma cells at the xylem/symplast boundary in roots, hypocotyls, stems and leaves. Also present in root tips epidermal cells.

The protein localises to the cell membrane. The catalysed reaction is Na(+)(in) + H(+)(out) = Na(+)(out) + H(+)(in). It catalyses the reaction K(+)(in) + H(+)(out) = K(+)(out) + H(+)(in). Its function is as follows. Acts in electroneutral exchange of protons for cations such as Na(+) or Li(+) across plasma membrane. Involved in Na(+) and K(+) homeostasis. Required for cytoplasmic Na(+) and Li(+) detoxification by secreting them from the cytoplasm to the extracellular space. Regulates Na(+) content of the xylem sap. This Arabidopsis thaliana (Mouse-ear cress) protein is Sodium/hydrogen exchanger 7 (NHX7).